The following is a 75-amino-acid chain: Large ribosomal subunit protein bL31 (75 aa).

Belongs to the bacterial ribosomal protein bL31 family. Type A subfamily. Part of the 50S ribosomal subunit.

Functionally, binds the 23S rRNA. This chain is Large ribosomal subunit protein bL31, found in Bradyrhizobium diazoefficiens (strain JCM 10833 / BCRC 13528 / IAM 13628 / NBRC 14792 / USDA 110).